The sequence spans 364 residues: Alanine racemase (364 aa).

Lys-34 (proton acceptor; specific for D-alanine) is an active-site residue. Lys-34 carries the post-translational modification N6-(pyridoxal phosphate)lysine. A substrate-binding site is contributed by Arg-129. Tyr-259 serves as the catalytic Proton acceptor; specific for L-alanine. Met-307 contacts substrate.

This sequence belongs to the alanine racemase family. Pyridoxal 5'-phosphate serves as cofactor.

It catalyses the reaction L-alanine = D-alanine. It participates in amino-acid biosynthesis; D-alanine biosynthesis; D-alanine from L-alanine: step 1/1. Functionally, catalyzes the interconversion of L-alanine and D-alanine. May also act on other amino acids. The polypeptide is Alanine racemase (alr) (Coxiella burnetii (strain CbuG_Q212) (Coxiella burnetii (strain Q212))).